Consider the following 428-residue polypeptide: Adenylosuccinate synthetase (428 aa).

GTP is bound by residues glycine 12–lysine 18 and glycine 40–threonine 42. The active-site Proton acceptor is the aspartate 13. 2 residues coordinate Mg(2+): aspartate 13 and glycine 40. Residues aspartate 13–lysine 16, asparagine 38–histidine 41, threonine 128, arginine 142, glutamine 223, threonine 238, and arginine 302 contribute to the IMP site. The active-site Proton donor is the histidine 41. Threonine 298 to arginine 304 provides a ligand contact to substrate. Residues arginine 304, serine 330–aspartate 332, and serine 412–glycine 414 contribute to the GTP site.

This sequence belongs to the adenylosuccinate synthetase family. As to quaternary structure, homodimer. Requires Mg(2+) as cofactor.

It is found in the cytoplasm. The catalysed reaction is IMP + L-aspartate + GTP = N(6)-(1,2-dicarboxyethyl)-AMP + GDP + phosphate + 2 H(+). The protein operates within purine metabolism; AMP biosynthesis via de novo pathway; AMP from IMP: step 1/2. In terms of biological role, plays an important role in the de novo pathway of purine nucleotide biosynthesis. Catalyzes the first committed step in the biosynthesis of AMP from IMP. The protein is Adenylosuccinate synthetase of Geobacillus sp. (strain WCH70).